The primary structure comprises 307 residues: Tropinone reductase homolog At2g29340 (307 aa).

13-37 (LVTGGASGIGYAIVEELAGFGARIH) provides a ligand contact to NADP(+). S146 serves as a coordination point for substrate. Y159 (proton acceptor) is an active-site residue.

This sequence belongs to the short-chain dehydrogenases/reductases (SDR) family. SDR65C subfamily.

The polypeptide is Tropinone reductase homolog At2g29340 (Arabidopsis thaliana (Mouse-ear cress)).